Reading from the N-terminus, the 445-residue chain is Squalene synthase (445 aa).

The next 2 helical transmembrane spans lie at 291–311 (STFT…DLVY) and 405–425 (LIVC…IAYV).

This sequence belongs to the phytoene/squalene synthase family. The cofactor is Mg(2+).

Its subcellular location is the endoplasmic reticulum membrane. It catalyses the reaction 2 (2E,6E)-farnesyl diphosphate + NADPH + H(+) = squalene + 2 diphosphate + NADP(+). The catalysed reaction is 2 (2E,6E)-farnesyl diphosphate + NADH + H(+) = squalene + 2 diphosphate + NAD(+). It functions in the pathway terpene metabolism; lanosterol biosynthesis; lanosterol from farnesyl diphosphate: step 1/3. In terms of biological role, catalyzes the condensation of 2 two farnesyl pyrophosphate moieties to form squalene. It is the first committed enzyme of the sterol biosynthesis pathway. Required for the biosynthesis of ergosterol. The chain is Squalene synthase (SQS1) from Yarrowia lipolytica (strain CLIB 122 / E 150) (Yeast).